Consider the following 248-residue polypeptide: tRNA (guanine-N(1)-)-methyltransferase (248 aa).

Residues G116 and 136–141 contribute to the S-adenosyl-L-methionine site; that span reads VGDYVL.

This sequence belongs to the RNA methyltransferase TrmD family. As to quaternary structure, homodimer.

The protein resides in the cytoplasm. The catalysed reaction is guanosine(37) in tRNA + S-adenosyl-L-methionine = N(1)-methylguanosine(37) in tRNA + S-adenosyl-L-homocysteine + H(+). Its function is as follows. Specifically methylates guanosine-37 in various tRNAs. This Psychromonas ingrahamii (strain DSM 17664 / CCUG 51855 / 37) protein is tRNA (guanine-N(1)-)-methyltransferase.